A 362-amino-acid polypeptide reads, in one-letter code: Cobalt-precorrin-5B C(1)-methyltransferase (362 aa).

Belongs to the CbiD family.

The enzyme catalyses Co-precorrin-5B + S-adenosyl-L-methionine = Co-precorrin-6A + S-adenosyl-L-homocysteine. Its pathway is cofactor biosynthesis; adenosylcobalamin biosynthesis; cob(II)yrinate a,c-diamide from sirohydrochlorin (anaerobic route): step 6/10. Its function is as follows. Catalyzes the methylation of C-1 in cobalt-precorrin-5B to form cobalt-precorrin-6A. In Burkholderia multivorans (strain ATCC 17616 / 249), this protein is Cobalt-precorrin-5B C(1)-methyltransferase.